We begin with the raw amino-acid sequence, 375 residues long: Platelet-derived growth factor receptor-like protein (375 aa).

The first 21 residues, 1–21 (MKVWLLLGLLLVHEALEDVTG), serve as a signal peptide directing secretion. Residues 22-64 (QHLPKNKRPKEPGENRIKPTNKKVKPKIPKIKDRDSADSTPKT) form a disordered region. Residues 40–50 (PTNKKVKPKIP) show a composition bias toward basic residues. Positions 62 to 159 (PKTQSIMMQV…GYICRKDETK (98 aa)) constitute an Ig-like C2-type 1 domain. An intrachain disulfide couples C96 to C143. N-linked (GlcNAc...) asparagine glycans are attached at residues N132 and N219. Residues 272-375 (PSTTILASSN…TTVATTVEFS (104 aa)) form the Ig-like C2-type 2 domain. C293 and C357 are oxidised to a cystine.

Forms a complex composed of PDGFRL, TNK2 and GRB2.

It is found in the secreted. The sequence is that of Platelet-derived growth factor receptor-like protein (PDGFRL) from Macaca fascicularis (Crab-eating macaque).